A 136-amino-acid polypeptide reads, in one-letter code: Histone H3 (136 aa).

The interval 1–43 (MARTKQTARKSTGGKAPRKQLASKAARKSAPSTGGVKKPHRYK) is disordered. Lys5 is modified (N6,N6,N6-trimethyllysine; alternate). N6,N6-dimethyllysine; alternate is present on Lys5. N6-methyllysine; alternate occurs at positions 5 and 10. Residue Lys10 is modified to N6-acetyllysine; alternate. Ser11 carries the phosphoserine modification. The residue at position 15 (Lys15) is an N6,N6-dimethyllysine; alternate. Residues Lys15, Lys19, Lys24, Lys28, and Lys37 each carry the N6-methyllysine; alternate modification. 5 positions are modified to N6-acetyllysine; alternate: Lys15, Lys19, Lys24, Lys28, and Lys37. Residues Lys28 and Lys37 each carry the N6,N6,N6-trimethyllysine; alternate modification. N6,N6-dimethyllysine; alternate is present on residues Lys28 and Lys37. Residues Lys57 and Lys65 each carry the N6-acetyllysine modification. Lys80 carries the N6,N6,N6-trimethyllysine; alternate modification. Lys80 is modified (N6,N6-dimethyllysine; alternate). At Lys80 the chain carries N6-methyllysine; alternate.

The protein belongs to the histone H3 family. As to quaternary structure, the nucleosome is a histone octamer containing two molecules each of H2A, H2B, H3 and H4 assembled in one H3-H4 heterotetramer and two H2A-H2B heterodimers. The octamer wraps approximately 147 bp of DNA. In terms of processing, phosphorylated by IPL1 to form H3S10ph. H3S10ph promotes subsequent H3K14ac formation by GCN5 and is required for transcriptional activation through TBP recruitment to the promoters. Mono-, di- and trimethylated by the COMPASS complex to form H3K4me1/2/3. H3K4me activates gene expression by regulating transcription elongation and plays a role in telomere length maintenance. H3K4me enrichment correlates with transcription levels, and occurs in a 5' to 3' gradient with H3K4me3 enrichment at the 5'-end of genes, shifting to H3K4me2 and then H3K4me1. Methylated by SET2 to form H3K36me. H3K36me represses gene expression. Methylated by DOT1 to form H3K79me. H3K79me is required for association of SIR proteins with telomeric regions and for telomeric silencing. The COMPASS-mediated formation of H3K4me2/3 and the DOT1-mediated formation of H3K79me require H2BK123ub1. Post-translationally, acetylation of histone H3 leads to transcriptional activation. H3K14ac formation by GCN5 is promoted by H3S10ph. H3K14ac can also be formed by ESA1. H3K56ac formation occurs predominantly in newly synthesized H3 molecules during G1, S and G2/M of the cell cycle and may be involved in DNA repair.

Its subcellular location is the nucleus. The protein resides in the chromosome. Its function is as follows. Core component of nucleosome. Nucleosomes wrap and compact DNA into chromatin, limiting DNA accessibility to the cellular machineries which require DNA as a template. Histones thereby play a central role in transcription regulation, DNA repair, DNA replication and chromosomal stability. DNA accessibility is regulated via a complex set of post-translational modifications of histones, also called histone code, and nucleosome remodeling. The protein is Histone H3 (HHT1) of Candida glabrata (strain ATCC 2001 / BCRC 20586 / JCM 3761 / NBRC 0622 / NRRL Y-65 / CBS 138) (Yeast).